We begin with the raw amino-acid sequence, 163 residues long: Phosphopantetheine adenylyltransferase (163 aa).

Ser9 provides a ligand contact to substrate. Residues 9–10 (SF) and His17 contribute to the ATP site. Positions 41, 73, and 87 each coordinate substrate. ATP is bound by residues 88 to 90 (GLR), Glu98, and 123 to 129 (YAYFSSS).

It belongs to the bacterial CoaD family. In terms of assembly, homohexamer. The cofactor is Mg(2+).

It localises to the cytoplasm. It carries out the reaction (R)-4'-phosphopantetheine + ATP + H(+) = 3'-dephospho-CoA + diphosphate. It participates in cofactor biosynthesis; coenzyme A biosynthesis; CoA from (R)-pantothenate: step 4/5. Reversibly transfers an adenylyl group from ATP to 4'-phosphopantetheine, yielding dephospho-CoA (dPCoA) and pyrophosphate. The polypeptide is Phosphopantetheine adenylyltransferase (Lactiplantibacillus plantarum (strain ATCC BAA-793 / NCIMB 8826 / WCFS1) (Lactobacillus plantarum)).